The primary structure comprises 291 residues: Protein/nucleic acid deglycase HchA (291 aa).

The segment covering 1-18 has biased composition (basic and acidic residues); the sequence is MSNERDTSRTPTPDHAEH. Positions 1–20 are disordered; sequence MSNERDTSRTPTPDHAEHNA. Residue cysteine 188 is the Nucleophile of the active site.

It belongs to the peptidase C56 family. HchA subfamily.

The protein resides in the cytoplasm. The enzyme catalyses N(omega)-(1-hydroxy-2-oxopropyl)-L-arginyl-[protein] + H2O = lactate + L-arginyl-[protein] + H(+). The catalysed reaction is N(6)-(1-hydroxy-2-oxopropyl)-L-lysyl-[protein] + H2O = lactate + L-lysyl-[protein] + H(+). It carries out the reaction S-(1-hydroxy-2-oxopropyl)-L-cysteinyl-[protein] + H2O = lactate + L-cysteinyl-[protein] + H(+). It catalyses the reaction N(omega)-(1-hydroxy-2-oxoethyl)-L-arginyl-[protein] + H2O = L-arginyl-[protein] + glycolate + H(+). The enzyme catalyses N(6)-(1-hydroxy-2-oxoethyl)-L-lysyl-[protein] + H2O = glycolate + L-lysyl-[protein] + H(+). The catalysed reaction is S-(1-hydroxy-2-oxoethyl)-L-cysteinyl-[protein] + H2O = glycolate + L-cysteinyl-[protein] + H(+). It carries out the reaction N(2)-(1-hydroxy-2-oxopropyl)-dGTP + H2O = lactate + dGTP + H(+). It catalyses the reaction N(2)-(1-hydroxy-2-oxopropyl)-GTP + H2O = lactate + GTP + H(+). The enzyme catalyses N(2)-(1-hydroxy-2-oxopropyl)-GDP + H2O = lactate + GDP + H(+). The catalysed reaction is N(2)-(1-hydroxy-2-oxopropyl)-GMP + H2O = lactate + GMP + H(+). It carries out the reaction N(2)-(1-hydroxy-2-oxoethyl)-dGTP + H2O = dGTP + glycolate + H(+). It catalyses the reaction N(2)-(1-hydroxy-2-oxoethyl)-GTP + H2O = glycolate + GTP + H(+). The enzyme catalyses N(2)-(1-hydroxy-2-oxoethyl)-GDP + H2O = glycolate + GDP + H(+). The catalysed reaction is N(2)-(1-hydroxy-2-oxoethyl)-GMP + H2O = glycolate + GMP + H(+). It carries out the reaction an N(2)-(1-hydroxy-2-oxopropyl)-guanosine in RNA + H2O = a guanosine in RNA + lactate + H(+). It catalyses the reaction an N(2)-(1-hydroxy-2-oxopropyl)-2'-deoxyguanosine in DNA + H2O = a 2'-deoxyguanosine in DNA + lactate + H(+). The enzyme catalyses an N(2)-(1-hydroxy-2-oxoethyl)-guanosine in RNA + H2O = a guanosine in RNA + glycolate + H(+). The catalysed reaction is an N(2)-(1-hydroxy-2-oxoethyl)-2'-deoxyguanosine in DNA + H2O = a 2'-deoxyguanosine in DNA + glycolate + H(+). In terms of biological role, protein and nucleotide deglycase that catalyzes the deglycation of the Maillard adducts formed between amino groups of proteins or nucleotides and reactive carbonyl groups of glyoxals. Thus, functions as a protein deglycase that repairs methylglyoxal- and glyoxal-glycated proteins, and releases repaired proteins and lactate or glycolate, respectively. Deglycates cysteine, arginine and lysine residues in proteins, and thus reactivates these proteins by reversing glycation by glyoxals. Acts on early glycation intermediates (hemithioacetals and aminocarbinols), preventing the formation of Schiff bases and advanced glycation endproducts (AGE). Also functions as a nucleotide deglycase able to repair glycated guanine in the free nucleotide pool (GTP, GDP, GMP, dGTP) and in DNA and RNA. Is thus involved in a major nucleotide repair system named guanine glycation repair (GG repair), dedicated to reversing methylglyoxal and glyoxal damage via nucleotide sanitization and direct nucleic acid repair. Plays an important role in protecting cells from carbonyl stress. The chain is Protein/nucleic acid deglycase HchA from Pseudomonas aeruginosa (strain LESB58).